A 285-amino-acid chain; its full sequence is E2F-associated phosphoprotein (285 aa).

Residue methionine 1 is modified to N-acetylmethionine. The disordered stretch occupies residues 1–30 (MNRLPDDYDPYAVEEPSDEEPALSSSEDEV). The span at 15 to 30 (EPSDEEPALSSSEDEV) shows a compositional bias: acidic residues. Serine 17 carries the post-translational modification Phosphoserine. Residue threonine 37 is modified to Phosphothreonine. Positions 48–96 (CLTGESESSSEDEFEKEMEAELNSTMKTMEDKLSSLGTGSSSGNGKVAT) are disordered. The segment covering 55–67 (SSSEDEFEKEMEA) has biased composition (acidic residues). Low complexity predominate over residues 81 to 92 (SSLGTGSSSGNG). Phosphoserine is present on residues serine 109 and serine 111. The disordered stretch occupies residues 118-144 (VQVTKKKKKKQHKIPTNDELLYDPEKD). Residues 121-130 (TKKKKKKQHK) are compositionally biased toward basic residues.

As to quaternary structure, interacts with E2F1. The C-terminal half binds the N-terminal of E2F1. Also interacts with E2F2 and E2F3, but not E2F4. As to expression, ubiquitously expressed. Highest levels in heart, placenta, skeletal muscle and pancreas. Lower levels in brain, lung and kidney. In the brain, expressed in all regions with high levels in the cerebellum and cerebral cortex. Expressed in COS1 and transformed skin fibroblasts.

Its subcellular location is the cytoplasm. The protein resides in the nucleus. Its function is as follows. May play an important role in the fine-tuning of both major E2F1 activities, the regulation of the cell-cycle and the induction of apoptosis. Promotes S-phase entry, and inhibits p14(ARP) expression. The protein is E2F-associated phosphoprotein (EAPP) of Homo sapiens (Human).